The chain runs to 217 residues: Ran-binding protein 1 homolog b (217 aa).

2 disordered regions span residues 1-32 and 160-217; these read MASI…QVAP and ESEE…VPSA. The residue at position 2 (Ala2) is an N-acetylalanine. Over residues 14-26 the composition is skewed to acidic residues; the sequence is DEEETGANEDEDT. The RanBD1 domain occupies 29–164; the sequence is QVAPIVRLEE…FKEVAESEEE (136 aa). The segment covering 181 to 217 has biased composition (basic and acidic residues); it reads LTVEEKESEKKPVEKAEENKKSEAVEEKKTEESVPSA.

In terms of assembly, interacts with the GTP-bound form of RAN1, RAN2 and RAN3.

Its subcellular location is the nucleus. It is found in the nuclear pore complex. The polypeptide is Ran-binding protein 1 homolog b (RANBP1B) (Arabidopsis thaliana (Mouse-ear cress)).